The following is a 727-amino-acid chain: DNA topoisomerase 3 (727 aa).

The 134-residue stretch at 3-136 (KTVVLAEKPS…IKRLWISSVT (134 aa)) folds into the Toprim domain. 2 residues coordinate Mg(2+): glutamate 9 and aspartate 105. In terms of domain architecture, Topo IA-type catalytic spans 153–593 (YENLYHSAVA…DMKAYAHQTV (441 aa)). The interval 187–192 (SCGRVQ) is interaction with DNA. Residue tyrosine 310 is the O-(5'-phospho-DNA)-tyrosine intermediate of the active site. The span at 685–699 (KRKNKDKARATKRDV) shows a compositional bias: basic and acidic residues. The tract at residues 685–714 (KRKNKDKARATKRDVSSYMKKQNKDEPINN) is disordered.

This sequence belongs to the type IA topoisomerase family. The cofactor is Mg(2+).

It carries out the reaction ATP-independent breakage of single-stranded DNA, followed by passage and rejoining.. In terms of biological role, releases the supercoiling and torsional tension of DNA, which is introduced during the DNA replication and transcription, by transiently cleaving and rejoining one strand of the DNA duplex. Introduces a single-strand break via transesterification at a target site in duplex DNA. The scissile phosphodiester is attacked by the catalytic tyrosine of the enzyme, resulting in the formation of a DNA-(5'-phosphotyrosyl)-enzyme intermediate and the expulsion of a 3'-OH DNA strand. The free DNA strand then undergoes passage around the unbroken strand, thus removing DNA supercoils. Finally, in the religation step, the DNA 3'-OH attacks the covalent intermediate to expel the active-site tyrosine and restore the DNA phosphodiester backbone. The polypeptide is DNA topoisomerase 3 (Bacillus subtilis (strain 168)).